A 356-amino-acid chain; its full sequence is tRNA N6-adenosine threonylcarbamoyltransferase (356 aa).

Fe cation-binding residues include His-115 and His-119. Substrate is bound by residues 138 to 142 (LVSGG), Asp-171, Gly-184, and Asn-283. A Fe cation-binding site is contributed by Asp-311.

Belongs to the KAE1 / TsaD family. The cofactor is Fe(2+).

The protein resides in the cytoplasm. It carries out the reaction L-threonylcarbamoyladenylate + adenosine(37) in tRNA = N(6)-L-threonylcarbamoyladenosine(37) in tRNA + AMP + H(+). Its function is as follows. Required for the formation of a threonylcarbamoyl group on adenosine at position 37 (t(6)A37) in tRNAs that read codons beginning with adenine. Is involved in the transfer of the threonylcarbamoyl moiety of threonylcarbamoyl-AMP (TC-AMP) to the N6 group of A37, together with TsaE and TsaB. TsaD likely plays a direct catalytic role in this reaction. The polypeptide is tRNA N6-adenosine threonylcarbamoyltransferase (Prochlorococcus marinus (strain MIT 9215)).